The sequence spans 850 residues: DEAD-box ATP-dependent RNA helicase 26 (850 aa).

2 disordered regions span residues 60–82 and 106–350; these read TRPERSQPEFARRSGAGGEIRAS and GKFT…ENDE. Residues 61–71 show a composition bias toward basic and acidic residues; it reads RPERSQPEFAR. A Phosphothreonine modification is found at Thr-109. A Phosphoserine modification is found at Ser-110. Composition is skewed to basic and acidic residues over residues 118 to 140 and 284 to 299; these read EVVRRNVDRDTSRGPRRGREGQS and GRNDRNVESGFRREPG. Composition is skewed to acidic residues over residues 315-325 and 336-350; these read LEEEDSSDDDE and LPSEDSSDEDDENDE. The Q motif signature appears at 382–410; the sequence is TRFDQFPLSPLSLKAIKDAGFETMTVVQE. In terms of domain architecture, Helicase ATP-binding spans 413–596; the sequence is LPIILQGKDV…HVALKRDHEF (184 aa). 426–433 is an ATP binding site; sequence AKTGTGKT. The DEAD box motif lies at 544 to 547; that stretch reads DEAD. One can recognise a Helicase C-terminal domain in the interval 630–777; it reads LLKEHIADNV…IDPEAVKRVQ (148 aa).

This sequence belongs to the DEAD box helicase family.

The enzyme catalyses ATP + H2O = ADP + phosphate + H(+). The polypeptide is DEAD-box ATP-dependent RNA helicase 26 (RH26) (Arabidopsis thaliana (Mouse-ear cress)).